Consider the following 95-residue polypeptide: Bombyxin C-2 (95 aa).

An N-terminal signal peptide occupies residues 1 to 19 (MKLVILLVVVSAMLVLGGA). A Pyrrolidone carboxylic acid modification is found at glutamine 20. Intrachain disulfides connect cysteine 27/cysteine 76, cysteine 39/cysteine 89, and cysteine 75/cysteine 80. Positions 47 to 67 (SGSQYAGYGWPWLPPFSSSRG) are cleaved as a propeptide — c peptide like.

The protein belongs to the insulin family. Heterodimer of a B chain and an A chain linked by two disulfide bonds.

It localises to the secreted. In terms of biological role, brain peptide responsible for activation of prothoracic glands to produce ecdysone in insects. The chain is Bombyxin C-2 (BBXC2) from Bombyx mori (Silk moth).